The chain runs to 459 residues: Cysteine--tRNA ligase (459 aa).

Cys-29 is a binding site for Zn(2+). The short motif at 31 to 41 (PTVYDRAHIGN) is the 'HIGH' region element. Zn(2+) contacts are provided by Cys-209, His-234, and Glu-238. Positions 267–271 (KMSKS) match the 'KMSKS' region motif. Residue Lys-270 coordinates ATP.

Belongs to the class-I aminoacyl-tRNA synthetase family. In terms of assembly, monomer. It depends on Zn(2+) as a cofactor.

The protein resides in the cytoplasm. It catalyses the reaction tRNA(Cys) + L-cysteine + ATP = L-cysteinyl-tRNA(Cys) + AMP + diphosphate. This Rhodospirillum rubrum (strain ATCC 11170 / ATH 1.1.1 / DSM 467 / LMG 4362 / NCIMB 8255 / S1) protein is Cysteine--tRNA ligase.